The chain runs to 196 residues: Large ribosomal subunit protein eL15 (196 aa).

The interval 162–196 (RGLTNAGRSNRGLQNRGKGAEHTRPSAGSGSRRGK) is disordered.

The protein belongs to the eukaryotic ribosomal protein eL15 family.

The chain is Large ribosomal subunit protein eL15 from Haloquadratum walsbyi (strain DSM 16790 / HBSQ001).